A 483-amino-acid chain; its full sequence is Regulatory protein ViaA (483 aa).

Belongs to the ViaA family. In terms of assembly, homodimer. Interacts with RavA.

Its subcellular location is the cytoplasm. Component of the RavA-ViaA chaperone complex, which may act on the membrane to optimize the function of some of the respiratory chains. ViaA stimulates the ATPase activity of RavA. The polypeptide is Regulatory protein ViaA (Shigella flexneri).